Reading from the N-terminus, the 487-residue chain is DNA polymerase delta small subunit (487 aa).

Methionine 1 bears the N-acetylmethionine mark. Serine 20 bears the Phosphoserine mark.

The protein belongs to the DNA polymerase delta/II small subunit family. DNA polymerase delta is a heterotrimer of POL3, POL32 and HYS2.

It is found in the nucleus. It catalyses the reaction DNA(n) + a 2'-deoxyribonucleoside 5'-triphosphate = DNA(n+1) + diphosphate. Its function is as follows. DNA polymerase delta (DNA polymerase III) participates in chromosomal DNA replication. It is required during synthesis of the leading and lagging DNA strands at the replication fork and binds at/or near replication origins and moves along DNA with the replication fork. It has 3'-5' proofreading exonuclease activity that correct errors arising during DNA replication. It is also involved in DNA synthesis during DNA repair. In Saccharomyces cerevisiae (strain ATCC 204508 / S288c) (Baker's yeast), this protein is DNA polymerase delta small subunit (POL31).